The following is a 63-amino-acid chain: KEGYPVDWGNCKYECMSDEYCKDLCADRKATSGYCYKLNWSCYCKGLPDDSPIKTPGKCRSGR.

An LCN-type CS-alpha/beta domain is found at 1–60; it reads KEGYPVDWGNCKYECMSDEYCKDLCADRKATSGYCYKLNWSCYCKGLPDDSPIKTPGKCR. 4 disulfide bridges follow: Cys-11–Cys-59, Cys-15–Cys-35, Cys-21–Cys-42, and Cys-25–Cys-44.

This sequence belongs to the long (4 C-C) scorpion toxin superfamily. Sodium channel inhibitor family. Alpha subfamily. In terms of tissue distribution, expressed by the venom gland.

It is found in the secreted. Alpha toxins bind voltage-independently at site-3 of sodium channels (Nav) and inhibits the inactivation of the activated channels, thereby blocking neuronal transmission. The chain is Putative alpha-neurotoxin RjAa9 from Rhopalurus junceus (Caribbean blue scorpion).